The primary structure comprises 30 residues: Trypsin inhibitor 7 (30 aa).

3 disulfides stabilise this stretch: cysteine 4–cysteine 21, cysteine 11–cysteine 23, and cysteine 17–cysteine 29.

The protein belongs to the protease inhibitor I7 (squash-type serine protease inhibitor) family.

Its subcellular location is the secreted. Strongly inhibits trypsin, weakly inhibits chymotrypsin. The protein is Trypsin inhibitor 7 of Cyclanthera pedata (Achocha).